Consider the following 282-residue polypeptide: Ermin (282 aa).

Composition is skewed to polar residues over residues 1 to 12 and 21 to 30; these read MTDTPVTLSGSE and NGQQPSSQTR. Residues 1–71 are disordered; that stretch reads MTDTPVTLSG…NSKGNVLPRG (71 aa). Phosphoserine occurs at positions 72, 212, 224, 228, and 231. Basic and acidic residues predominate over residues 212 to 224; the sequence is SPLKEESLAREDS. The interval 212–246 is disordered; sequence SPLKEESLAREDSPLSSPSSQPGTPDEQLVLGKKG. The span at 225 to 234 shows a compositional bias: polar residues; it reads PLSSPSSQPG. The residue at position 235 (Thr-235) is a Phosphothreonine. The interval 263–282 is binds actin; it reads KIRKGNTKQRIDEFESMMHL.

As to quaternary structure, binds actin. Expressed specifically by the oligodendrocytes. Highest expression seen in the spinal cord followed by brainstem, cerebellum, thalamus, and hypothalamus. In the myelin sheath, found mainly in the abaxon and the lateral few terminal loops. Its apposition to the myelinated axon, through the latter, defines an axonal subregion, termed juxtanode, at the Ranvier node-paranode junction.

The protein resides in the cytoplasm. It is found in the cytoskeleton. Its function is as follows. Plays a role in cytoskeletal rearrangements during the late wrapping and/or compaction phases of myelinogenesis as well as in maintenance and stability of myelin sheath in the adult. May play an important role in late-stage oligodendroglia maturation, myelin/Ranvier node formation during CNS development, and in the maintenance and plasticity of related structures in the mature CNS. The polypeptide is Ermin (Ermn) (Rattus norvegicus (Rat)).